Reading from the N-terminus, the 342-residue chain is MTDSSTDPSLSFSDAITHARGGNDLSAEQTGALIDAMLQGAANEEEVGQLLLALREKGEAVSELVGAARAMRKHMTRIDHEHDVLLDTCGTGGSGSGTFNISTAVAILASACGVAVAKHGNRRATSKTGSADVLECLGVKIESEPDQVSRRLNDIGICFCFAAKLHPAMRHVVSVRRKLAVPTLFNLLGPLCNPAGATHQLLGTAAPETQQKIAAALAELDTQRSYVLHAQDGQDEVSLDGETSCIEVASGTQQNHTWTPADFGLTPVHQNALAAADPPESAEIIRNLFGGSPGSHRDTVLAGCAAALRLVGRVSSLTEGVEIAAEAIDSKAAQDKLKQLAE.

5-phospho-alpha-D-ribose 1-diphosphate is bound by residues glycine 90, 93-94, threonine 98, 100-103, 118-126, and serine 130; these read GS, NIST, and KHGNRRATS. Glycine 90 contacts anthranilate. Residue serine 102 coordinates Mg(2+). Asparagine 121 provides a ligand contact to anthranilate. Arginine 176 is a binding site for anthranilate. Aspartate 235 and glutamate 236 together coordinate Mg(2+).

It belongs to the anthranilate phosphoribosyltransferase family. As to quaternary structure, homodimer. Mg(2+) serves as cofactor.

It carries out the reaction N-(5-phospho-beta-D-ribosyl)anthranilate + diphosphate = 5-phospho-alpha-D-ribose 1-diphosphate + anthranilate. Its pathway is amino-acid biosynthesis; L-tryptophan biosynthesis; L-tryptophan from chorismate: step 2/5. In terms of biological role, catalyzes the transfer of the phosphoribosyl group of 5-phosphorylribose-1-pyrophosphate (PRPP) to anthranilate to yield N-(5'-phosphoribosyl)-anthranilate (PRA). The protein is Anthranilate phosphoribosyltransferase of Rhodopirellula baltica (strain DSM 10527 / NCIMB 13988 / SH1).